A 378-amino-acid chain; its full sequence is Ribosomal RNA large subunit methyltransferase G (378 aa).

The protein belongs to the methyltransferase superfamily. RlmG family.

The protein localises to the cytoplasm. The catalysed reaction is guanosine(1835) in 23S rRNA + S-adenosyl-L-methionine = N(2)-methylguanosine(1835) in 23S rRNA + S-adenosyl-L-homocysteine + H(+). Its function is as follows. Specifically methylates the guanine in position 1835 (m2G1835) of 23S rRNA. This chain is Ribosomal RNA large subunit methyltransferase G, found in Salmonella paratyphi B (strain ATCC BAA-1250 / SPB7).